The primary structure comprises 496 residues: Squalene epoxidase ERG1 (496 aa).

The chain crosses the membrane as a helical span at residues 4–24 (VKYDAIIIGAGVIGPTIATAF). FAD contacts are provided by residues 15-16 (VI), 35-36 (ER), R43, R148, V164, D332, and M345. The next 2 helical transmembrane spans lie at 431-451 (IGLLSGMLPFPMLLFNHFFSV) and 466-486 (LGFPLALFEAFEVLFTAIVIF).

Belongs to the squalene monooxygenase family. FAD is required as a cofactor.

The protein resides in the microsome membrane. It is found in the endoplasmic reticulum membrane. It carries out the reaction squalene + reduced [NADPH--hemoprotein reductase] + O2 = (S)-2,3-epoxysqualene + oxidized [NADPH--hemoprotein reductase] + H2O + H(+). It functions in the pathway terpene metabolism; lanosterol biosynthesis; lanosterol from farnesyl diphosphate: step 2/3. With respect to regulation, activity is completely abolished by Triton X-100, deoxycholate or Cu(2+), and partially inhibited by thiol reagents, rotenone and antimycin A. The allylamine antimycotic agents naftifine and SF 86-327are potent inhibitors and show apparently non-competitive kinetics with respect to the substrate squalene. Squalene epoxidase; part of the third module of ergosterol biosynthesis pathway that includes the late steps of the pathway. Erg1 catalyzes the epoxidation of squalene into 2,3-epoxysqualene. The third module or late pathway involves the ergosterol synthesis itself through consecutive reactions that mainly occur in the endoplasmic reticulum (ER) membrane. Firstly, the squalene synthase ERG9 catalyzes the condensation of 2 farnesyl pyrophosphate moieties to form squalene, which is the precursor of all steroids. Squalene synthase is crucial for balancing the incorporation of farnesyl diphosphate (FPP) into sterol and nonsterol isoprene synthesis. Secondly, the squalene epoxidase ERG1 catalyzes the stereospecific oxidation of squalene to (S)-2,3-epoxysqualene, which is considered to be a rate-limiting enzyme in steroid biosynthesis. Then, the lanosterol synthase ERG7 catalyzes the cyclization of (S)-2,3 oxidosqualene to lanosterol, a reaction that forms the sterol core. In the next steps, lanosterol is transformed to zymosterol through a complex process involving various demethylation, reduction and desaturation reactions. The lanosterol 14-alpha-demethylase ERG11 (also known as CYP51) catalyzes C14-demethylation of lanosterol to produce 4,4'-dimethyl cholesta-8,14,24-triene-3-beta-ol, which is critical for ergosterol biosynthesis. The C-14 reductase ERG24 reduces the C14=C15 double bond of 4,4-dimethyl-cholesta-8,14,24-trienol to produce 4,4-dimethyl-cholesta-8,24-dienol. 4,4-dimethyl-cholesta-8,24-dienol is substrate of the C-4 demethylation complex ERG25-ERG26-ERG27 in which ERG25 catalyzes the three-step monooxygenation required for the demethylation of 4,4-dimethyl and 4alpha-methylsterols, ERG26 catalyzes the oxidative decarboxylation that results in a reduction of the 3-beta-hydroxy group at the C-3 carbon to an oxo group, and ERG27 is responsible for the reduction of the keto group on the C-3. ERG28 has a role as a scaffold to help anchor ERG25, ERG26 and ERG27 to the endoplasmic reticulum and ERG29 regulates the activity of the iron-containing C4-methylsterol oxidase ERG25. Then, the sterol 24-C-methyltransferase ERG6 catalyzes the methyl transfer from S-adenosyl-methionine to the C-24 of zymosterol to form fecosterol. The C-8 sterol isomerase ERG2 catalyzes the reaction which results in unsaturation at C-7 in the B ring of sterols and thus converts fecosterol to episterol. The sterol-C5-desaturase ERG3 then catalyzes the introduction of a C-5 double bond in the B ring to produce 5-dehydroepisterol. The C-22 sterol desaturase ERG5 further converts 5-dehydroepisterol into ergosta-5,7,22,24(28)-tetraen-3beta-ol by forming the C-22(23) double bond in the sterol side chain. Finally, ergosta-5,7,22,24(28)-tetraen-3beta-ol is substrate of the C-24(28) sterol reductase ERG4 to produce ergosterol. The protein is Squalene epoxidase ERG1 of Candida albicans (strain SC5314 / ATCC MYA-2876) (Yeast).